The sequence spans 251 residues: tRNA (guanine-N(7)-)-methyltransferase (251 aa).

The interval 1 to 43 (MQPNEQPGTGPADTTLEQQDTAAAEVGHPRRIRSFVRRAGRTS) is disordered. Basic residues predominate over residues 29–40 (PRRIRSFVRRAG). S-adenosyl-L-methionine contacts are provided by E82, E107, D134, and D157. Residue D157 is part of the active site. K161 is a substrate binding site. The tract at residues 163 to 168 (RHNKRR) is interaction with RNA. Substrate contacts are provided by residues D193 and 228 to 231 (TKFE).

The protein belongs to the class I-like SAM-binding methyltransferase superfamily. TrmB family.

The catalysed reaction is guanosine(46) in tRNA + S-adenosyl-L-methionine = N(7)-methylguanosine(46) in tRNA + S-adenosyl-L-homocysteine. The protein operates within tRNA modification; N(7)-methylguanine-tRNA biosynthesis. Its function is as follows. Catalyzes the formation of N(7)-methylguanine at position 46 (m7G46) in tRNA. The chain is tRNA (guanine-N(7)-)-methyltransferase from Ralstonia nicotianae (strain ATCC BAA-1114 / GMI1000) (Ralstonia solanacearum).